Consider the following 97-residue polypeptide: Integration host factor subunit beta (97 aa).

Belongs to the bacterial histone-like protein family. In terms of assembly, heterodimer of an alpha and a beta chain.

Its function is as follows. This protein is one of the two subunits of integration host factor, a specific DNA-binding protein that functions in genetic recombination as well as in transcriptional and translational control. The chain is Integration host factor subunit beta from Buchnera aphidicola subsp. Cinara cedri (strain Cc).